We begin with the raw amino-acid sequence, 152 residues long: Ribosome maturation factor RimP (152 aa).

This sequence belongs to the RimP family.

It localises to the cytoplasm. Functionally, required for maturation of 30S ribosomal subunits. In Yersinia pestis, this protein is Ribosome maturation factor RimP.